Here is a 440-residue protein sequence, read N- to C-terminus: MDKLAVLYAEHIATLQQRTRTICEREGLEGLVIHSGQAKRQFLDDMYYPFKVNPHFKAWLPVLDNPHCWIVVNGSDKPKLIFYRPVDFWHKVPDEPRDFWAEYFDIELLLQPDQVEKLLPYDKANYAYVGEYLEVAQALGFSVMNPEPVLNYFHYHRAYKTQYELECLRNANRIAVDGHKAARDTFFNGGSEFDIQQAYLMATRQSENEMPYGNIVALNENCAILHYTHFEAKAPQQHNSFLIDAGANFNGYAADITRTYDFKKQGEFAELVQAMTAAQIELGTGLKPGMLYGDLHVECHNRVAQILSDFDIVKLPAEEIVERKITSTFFPHGLGHHLGLQVHDMGGFMADEMGAQQAAPEGHPFLRCTRIIEKNQVFTIEPGLYFIDSLLGDLAQTDNKQFINWQKVESFKPYGGIRIEDNIIVHEDSLENMTRNLALD.

The Mn(2+) site is built by Asp-244, Asp-255, His-336, Glu-381, and Glu-420.

This sequence belongs to the peptidase M24B family. Bacterial-type prolidase subfamily. The cofactor is Mn(2+).

It catalyses the reaction Xaa-L-Pro dipeptide + H2O = an L-alpha-amino acid + L-proline. In terms of biological role, splits dipeptides with a prolyl residue in the C-terminal position. The chain is Xaa-Pro dipeptidase from Pseudoalteromonas translucida (strain TAC 125).